Reading from the N-terminus, the 126-residue chain is Small ribosomal subunit protein bS6 (126 aa).

A disordered region spans residues 101-126; sequence VMMKAKEERTAKREDAAPRAEEAAAE. The span at 104–126 shows a compositional bias: basic and acidic residues; that stretch reads KAKEERTAKREDAAPRAEEAAAE.

Belongs to the bacterial ribosomal protein bS6 family.

In terms of biological role, binds together with bS18 to 16S ribosomal RNA. This is Small ribosomal subunit protein bS6 from Aliivibrio salmonicida (strain LFI1238) (Vibrio salmonicida (strain LFI1238)).